The primary structure comprises 383 residues: Trichodiene synthase (383 aa).

Belongs to the trichodiene synthase family.

It carries out the reaction (2E,6E)-farnesyl diphosphate = trichodiene + diphosphate. It functions in the pathway sesquiterpene biosynthesis; trichothecene biosynthesis. In terms of biological role, TS is a member of the terpene cyclase group of enzymes. It catalyzes the isomerization and cyclization of farnesyl pyro-phosphate to form trichodiene, the first cyclic intermediate in the biosynthetic pathway for trichothecenes. It serves to branch trichothecene biosynthesis from the isoprenoid pathway. This is Trichodiene synthase (TRI5) from Gibberella pulicaris.